The following is a 184-amino-acid chain: Photosystem I assembly protein Ycf4 (184 aa).

Transmembrane regions (helical) follow at residues 22 to 42 and 57 to 77; these read FCWAFILFLGSLGFLLVGISS and IIFFPQGIVMSFYGIAGLFIS.

The protein belongs to the Ycf4 family.

The protein resides in the plastid. Its subcellular location is the chloroplast thylakoid membrane. Seems to be required for the assembly of the photosystem I complex. The polypeptide is Photosystem I assembly protein Ycf4 (Ipomoea purpurea (Common morning glory)).